Consider the following 547-residue polypeptide: Sodium-coupled neutral amino acid transporter 4 (547 aa).

The interval 1 to 34 (MDPMELNNVSIEPDGDSCSGDSIQDSYTGMENSD) is disordered. Residues 1-104 (MDPMELNNVS…GLSYAMANTG (104 aa)) are Extracellular-facing. Polar residues predominate over residues 19-31 (SGDSIQDSYTGME). At S49 the chain carries Phosphoserine. The helical transmembrane segment at 105–125 (IILFIIMLLTVAILSLYSVHL) threads the bilayer. Topologically, residues 126–151 (LLKTAKEGGSLIYEKLGEKAFGWPGK) are cytoplasmic. Residues 152 to 172 (IGAFISITMQNIGAMSSYLFI) traverse the membrane as a helical segment. At 173-195 (IKYELPEVIRAFMGLEENTGEWY) the chain is on the extracellular side. A helical membrane pass occupies residues 196–216 (LNGNYLVLFVSVGIILPLSLL). The Cytoplasmic portion of the chain corresponds to 217-220 (KNLG). Residues 221-241 (YLGYTSGFSLSCMVFFVSVVI) traverse the membrane as a helical segment. Topologically, residues 242 to 332 (YKKFQIPCPL…PKYFVFNSRT (91 aa)) are extracellular. C249 and C321 are disulfide-bonded. N-linked (GlcNAc...) asparagine glycans are attached at residues N260, N264, and N276. Residues 333 to 353 (AYAIPILAFAFVCHPEVLPIY) form a helical membrane-spanning segment. At 354-369 (SELKDRSRRKMQTVSN) the chain is on the cytoplasmic side. Residues 370–390 (ISISGMLVMYLLAALFGYLSF) form a helical membrane-spanning segment. The Extracellular portion of the chain corresponds to 391–411 (YGDVEDELLHAYSKVYTFDTA). A helical membrane pass occupies residues 412–432 (LLMVRLAVLVAVTLTVPIVLF). Over 433-453 (PIRTSVITLLFPRKPFSWLKH) the chain is Cytoplasmic. The chain crosses the membrane as a helical span at residues 454 to 474 (FGIAAIIIALNNILVILVPTI). Residues 475–476 (KY) are Extracellular-facing. Residues 477-497 (IFGFIGASSATMLIFILPAAF) traverse the membrane as a helical segment. Residues 498-514 (YLKLVKKEPLRSPQKIG) lie on the Cytoplasmic side of the membrane. A helical membrane pass occupies residues 515–535 (ALVFLVTGIIFMMGSMALIIL). The Extracellular segment spans residues 536-547 (DWIYNPPNPNHH).

This sequence belongs to the amino acid/polyamine transporter 2 family. In terms of processing, the disulfide bond plays an important role in substrate transport, but has no effect on trafficking to the cell surface. In terms of tissue distribution, detected in liver, in hepatocytes surrounding the central vein. Not detected in heart, kidney, brain, lung, small intestine, spleen and thymus. Highly expressed in placenta.

It localises to the cell membrane. The protein localises to the cell projection. It is found in the microvillus membrane. The catalysed reaction is L-alanine(in) + Na(+)(in) = L-alanine(out) + Na(+)(out). It carries out the reaction L-methionine(in) + Na(+)(in) = L-methionine(out) + Na(+)(out). It catalyses the reaction L-asparagine(in) + Na(+)(in) = L-asparagine(out) + Na(+)(out). The enzyme catalyses L-threonine(in) + Na(+)(in) = L-threonine(out) + Na(+)(out). The catalysed reaction is L-serine(in) + Na(+)(in) = L-serine(out) + Na(+)(out). It carries out the reaction glycine(in) + Na(+)(in) = glycine(out) + Na(+)(out). It catalyses the reaction L-glutamine(in) + Na(+)(in) = L-glutamine(out) + Na(+)(out). The enzyme catalyses L-histidine(in) + Na(+)(in) = L-histidine(out) + Na(+)(out). The catalysed reaction is L-cysteine(in) + Na(+)(in) = L-cysteine(out) + Na(+)(out). It carries out the reaction L-proline(in) + Na(+)(in) = L-proline(out) + Na(+)(out). Symporter that cotransports neutral amino acids and sodium ions from the extraccellular to the intracellular side of the cell membrane. The transport is electrogenic, pH dependent and partially tolerates substitution of Na(+) by Li(+). Preferentially transports smaller amino acids, such as glycine, L-alanine, L-serine, L-asparagine and L-threonine, followed by L-cysteine, L-histidine, L-proline and L-glutamine and L-methionine. The chain is Sodium-coupled neutral amino acid transporter 4 from Mus musculus (Mouse).